A 407-amino-acid chain; its full sequence is Serine/threonine transporter SstT (407 aa).

Transmembrane regions (helical) follow at residues 14-34 (GSLV…ATVS), 48-68 (FVGA…AASI), 82-102 (IVIL…LMSF), 141-161 (AVLT…GLAL), 192-212 (IGIF…AIAG), 216-236 (LLLV…PAIV), 290-310 (IPLG…ILTL), 316-336 (MGIQ…GVSA), and 363-383 (VAMQ…SAET).

It belongs to the dicarboxylate/amino acid:cation symporter (DAACS) (TC 2.A.23) family.

Its subcellular location is the cell inner membrane. The enzyme catalyses L-serine(in) + Na(+)(in) = L-serine(out) + Na(+)(out). It carries out the reaction L-threonine(in) + Na(+)(in) = L-threonine(out) + Na(+)(out). Functionally, involved in the import of serine and threonine into the cell, with the concomitant import of sodium (symport system). The polypeptide is Serine/threonine transporter SstT (Shewanella halifaxensis (strain HAW-EB4)).